A 60-amino-acid chain; its full sequence is Cytotoxin 2 (60 aa).

4 disulfides stabilise this stretch: Cys3-Cys21, Cys14-Cys38, Cys42-Cys53, and Cys54-Cys59.

This sequence belongs to the three-finger toxin family. Short-chain subfamily. Type IA cytotoxin sub-subfamily. In terms of assembly, monomer in solution; Homodimer and oligomer in the presence of negatively charged lipids forming a pore with a size ranging between 20 and 30 Angstroms. As to expression, expressed by the venom gland.

The protein resides in the secreted. It localises to the target cell membrane. In terms of biological role, shows cytolytic activity on many different cells by forming pore in lipid membranes. In vivo, increases heart rate or kills the animal by cardiac arrest. In addition, it binds to heparin with high affinity, interacts with Kv channel-interacting protein 1 (KCNIP1) in a calcium-independent manner, and binds to integrin alpha-V/beta-3 (ITGAV/ITGB3) with moderate affinity. This Naja nivea (Cape cobra) protein is Cytotoxin 2.